Here is a 111-residue protein sequence, read N- to C-terminus: Aspartate 1-decarboxylase (111 aa).

Catalysis depends on serine 25, which acts as the Schiff-base intermediate with substrate; via pyruvic acid. Serine 25 is subject to Pyruvic acid (Ser). Threonine 57 is a binding site for substrate. Tyrosine 58 acts as the Proton donor in catalysis. A substrate-binding site is contributed by 73–75; it reads GPA.

This sequence belongs to the PanD family. As to quaternary structure, heterooctamer of four alpha and four beta subunits. Requires pyruvate as cofactor. Post-translationally, is synthesized initially as an inactive proenzyme, which is activated by self-cleavage at a specific serine bond to produce a beta-subunit with a hydroxyl group at its C-terminus and an alpha-subunit with a pyruvoyl group at its N-terminus.

The protein localises to the cytoplasm. The enzyme catalyses L-aspartate + H(+) = beta-alanine + CO2. It participates in cofactor biosynthesis; (R)-pantothenate biosynthesis; beta-alanine from L-aspartate: step 1/1. Catalyzes the pyruvoyl-dependent decarboxylation of aspartate to produce beta-alanine. This Coxiella burnetii (strain RSA 493 / Nine Mile phase I) protein is Aspartate 1-decarboxylase.